The sequence spans 853 residues: DNA mismatch repair protein MutS (853 aa).

Position 614 to 621 (614 to 621 (GPNMGGKS)) interacts with ATP.

It belongs to the DNA mismatch repair MutS family.

Its function is as follows. This protein is involved in the repair of mismatches in DNA. It is possible that it carries out the mismatch recognition step. This protein has a weak ATPase activity. The protein is DNA mismatch repair protein MutS of Escherichia coli (strain SE11).